The following is a 774-amino-acid chain: Transmembrane GTPase fzo-1 (774 aa).

The tract at residues 1–29 (MSGTASLVHTLPASGDSNHRGLHSLKNSR) is disordered. The Cytoplasmic segment spans residues 1–617 (MSGTASLVHT…EEQAMMTQMV (617 aa)). Residues 20–29 (RGLHSLKNSR) show a composition bias toward basic residues. The stretch at 51 to 71 (YGELKDNVAELEGVYKDIKEN) forms a coiled coil. One can recognise a Dynamin-type G domain in the interval 97–352 (QRDNMKVVFF…TRALEFQNFE (256 aa)). Positions 107–114 (GRTSNGKS) are G1 motif. 110 to 115 (SNGKST) is a GTP binding site. A G2 motif region spans residues 133 to 134 (TT). Residues 211 to 214 (DSPG) form a G3 motif region. 270 to 273 (NRWD) is a GTP binding site. Residues 270–273 (NRWD) are G4 motif. Glu300 is a region of interest (G5 motif). Ser317 is a binding site for GTP. Residues 385 to 415 (NLNSVLTSAAEQRSKLQNNLNESTRTFNECR) adopt a coiled-coil conformation. A helical membrane pass occupies residues 618-638 (LTSAAFLANGSLGVLVVGGIV). Over 639–640 (YK) the chain is Mitochondrial intermembrane. Residues 641 to 661 (AVGWRVIAVGGAAYAGLYAWE) traverse the membrane as a helical segment. Residues 662-774 (RMRWNSGAKE…YLRSDSPPTP (113 aa)) lie on the Cytoplasmic side of the membrane.

This sequence belongs to the TRAFAC class dynamin-like GTPase superfamily. Dynamin/Fzo/YdjA family. Mitofusin subfamily. Interacts with ced-9; interaction may be suppressed by interaction of ced-9 with egl-1.

The protein localises to the mitochondrion outer membrane. The enzyme catalyses GTP + H2O = GDP + phosphate + H(+). Its function is as follows. Probable transmembrane GTPase. Mediates mitochondrial fusion. Fusion of mitochondria occurs in many cell types and constitutes an important step in mitochondria morphology, which is balanced between fusion and fission. Dispensable for normal apoptotic processes during embryonic development. This is Transmembrane GTPase fzo-1 from Caenorhabditis elegans.